We begin with the raw amino-acid sequence, 356 residues long: Histidinol-phosphate aminotransferase (356 aa).

An N6-(pyridoxal phosphate)lysine modification is found at Lys-208.

The protein belongs to the class-II pyridoxal-phosphate-dependent aminotransferase family. Histidinol-phosphate aminotransferase subfamily. In terms of assembly, homodimer. Pyridoxal 5'-phosphate serves as cofactor.

It carries out the reaction L-histidinol phosphate + 2-oxoglutarate = 3-(imidazol-4-yl)-2-oxopropyl phosphate + L-glutamate. It participates in amino-acid biosynthesis; L-histidine biosynthesis; L-histidine from 5-phospho-alpha-D-ribose 1-diphosphate: step 7/9. This is Histidinol-phosphate aminotransferase from Lactococcus lactis subsp. cremoris (strain SK11).